The chain runs to 274 residues: UPF0758 protein RHE_CH01848 (274 aa).

The tract at residues 1-37 (MAKGPVATSSDDELPFETEEPVADERSFFGGRPQKPA) is disordered. Residues 10–22 (SDDELPFETEEPV) are compositionally biased toward acidic residues. Residues 152 to 274 (VLSSWSSVIQ…HVSLKGLKLI (123 aa)) form the MPN domain. His223, His225, and Asp236 together coordinate Zn(2+). Positions 223-236 (HNHPSGDPTPSRAD) match the JAMM motif motif.

This sequence belongs to the UPF0758 family.

The protein is UPF0758 protein RHE_CH01848 of Rhizobium etli (strain ATCC 51251 / DSM 11541 / JCM 21823 / NBRC 15573 / CFN 42).